The chain runs to 117 residues: Large ribosomal subunit protein bL19 (117 aa).

Belongs to the bacterial ribosomal protein bL19 family.

In terms of biological role, this protein is located at the 30S-50S ribosomal subunit interface and may play a role in the structure and function of the aminoacyl-tRNA binding site. This chain is Large ribosomal subunit protein bL19, found in Shewanella pealeana (strain ATCC 700345 / ANG-SQ1).